Consider the following 451-residue polypeptide: Tubulin alpha-2 chain (451 aa).

Q11 lines the GTP pocket. The residue at position 40 (K40) is an N6-acetyllysine. GTP-binding residues include E71, G144, T145, T179, N206, and N228. E71 serves as a coordination point for Mg(2+). E254 is an active-site residue.

This sequence belongs to the tubulin family. In terms of assembly, dimer of alpha and beta chains. A typical microtubule is a hollow water-filled tube with an outer diameter of 25 nm and an inner diameter of 15 nM. Alpha-beta heterodimers associate head-to-tail to form protofilaments running lengthwise along the microtubule wall with the beta-tubulin subunit facing the microtubule plus end conferring a structural polarity. Microtubules usually have 13 protofilaments but different protofilament numbers can be found in some organisms and specialized cells. It depends on Mg(2+) as a cofactor. Post-translationally, undergoes a tyrosination/detyrosination cycle, the cyclic removal and re-addition of a C-terminal tyrosine residue by the enzymes tubulin tyrosine carboxypeptidase (TTCP) and tubulin tyrosine ligase (TTL), respectively. Acetylation of alpha chains at Lys-40 stabilizes microtubules and affects affinity and processivity of microtubule motors. This modification has a role in multiple cellular functions, ranging from cell motility, cell cycle progression or cell differentiation to intracellular trafficking and signaling.

The protein localises to the cytoplasm. The protein resides in the cytoskeleton. The enzyme catalyses GTP + H2O = GDP + phosphate + H(+). Functionally, tubulin is the major constituent of microtubules, a cylinder consisting of laterally associated linear protofilaments composed of alpha- and beta-tubulin heterodimers. Microtubules grow by the addition of GTP-tubulin dimers to the microtubule end, where a stabilizing cap forms. Below the cap, tubulin dimers are in GDP-bound state, owing to GTPase activity of alpha-tubulin. The sequence is that of Tubulin alpha-2 chain (TUBA2) from Zea mays (Maize).